The primary structure comprises 436 residues: Bifunctional protein GlmU (436 aa).

The interval 1–225 is pyrophosphorylase; that stretch reads MNNNTSIIIL…EQNFMGINDK (225 aa). UDP-N-acetyl-alpha-D-glucosamine is bound by residues 10–13, K24, Q76, and 83–84; these read LAAG and GT. Residue D104 coordinates Mg(2+). UDP-N-acetyl-alpha-D-glucosamine contacts are provided by G137, E151, N166, and N223. A Mg(2+)-binding site is contributed by N223. The tract at residues 226-246 is linker; it reads FQLSIAEKIMQDEIKQNLMKA. The segment at 247–436 is N-acetyltransferase; sequence GVLMRMPESI…KFFGKDDVKK (190 aa). R310 and K327 together coordinate UDP-N-acetyl-alpha-D-glucosamine. H338 (proton acceptor) is an active-site residue. Positions 341 and 352 each coordinate UDP-N-acetyl-alpha-D-glucosamine. Residues 361-362, S380, A398, and R415 each bind acetyl-CoA; that span reads NY.

In the N-terminal section; belongs to the N-acetylglucosamine-1-phosphate uridyltransferase family. This sequence in the C-terminal section; belongs to the transferase hexapeptide repeat family. As to quaternary structure, homotrimer. Mg(2+) is required as a cofactor.

The protein localises to the cytoplasm. It carries out the reaction alpha-D-glucosamine 1-phosphate + acetyl-CoA = N-acetyl-alpha-D-glucosamine 1-phosphate + CoA + H(+). The catalysed reaction is N-acetyl-alpha-D-glucosamine 1-phosphate + UTP + H(+) = UDP-N-acetyl-alpha-D-glucosamine + diphosphate. Its pathway is nucleotide-sugar biosynthesis; UDP-N-acetyl-alpha-D-glucosamine biosynthesis; N-acetyl-alpha-D-glucosamine 1-phosphate from alpha-D-glucosamine 6-phosphate (route II): step 2/2. It functions in the pathway nucleotide-sugar biosynthesis; UDP-N-acetyl-alpha-D-glucosamine biosynthesis; UDP-N-acetyl-alpha-D-glucosamine from N-acetyl-alpha-D-glucosamine 1-phosphate: step 1/1. It participates in bacterial outer membrane biogenesis; LPS lipid A biosynthesis. In terms of biological role, catalyzes the last two sequential reactions in the de novo biosynthetic pathway for UDP-N-acetylglucosamine (UDP-GlcNAc). The C-terminal domain catalyzes the transfer of acetyl group from acetyl coenzyme A to glucosamine-1-phosphate (GlcN-1-P) to produce N-acetylglucosamine-1-phosphate (GlcNAc-1-P), which is converted into UDP-GlcNAc by the transfer of uridine 5-monophosphate (from uridine 5-triphosphate), a reaction catalyzed by the N-terminal domain. The polypeptide is Bifunctional protein GlmU (Campylobacter concisus (strain 13826)).